A 373-amino-acid polypeptide reads, in one-letter code: Chorismate synthase (373 aa).

NADP(+) is bound by residues arginine 48 and arginine 54. FMN contacts are provided by residues 131-133 (RSS), 243-244 (NA), glycine 288, 303-307 (KPTSS), and arginine 329.

This sequence belongs to the chorismate synthase family. In terms of assembly, homotetramer. The cofactor is FMNH2.

The enzyme catalyses 5-O-(1-carboxyvinyl)-3-phosphoshikimate = chorismate + phosphate. The protein operates within metabolic intermediate biosynthesis; chorismate biosynthesis; chorismate from D-erythrose 4-phosphate and phosphoenolpyruvate: step 7/7. Functionally, catalyzes the anti-1,4-elimination of the C-3 phosphate and the C-6 proR hydrogen from 5-enolpyruvylshikimate-3-phosphate (EPSP) to yield chorismate, which is the branch point compound that serves as the starting substrate for the three terminal pathways of aromatic amino acid biosynthesis. This reaction introduces a second double bond into the aromatic ring system. This chain is Chorismate synthase, found in Beijerinckia indica subsp. indica (strain ATCC 9039 / DSM 1715 / NCIMB 8712).